Here is a 927-residue protein sequence, read N- to C-terminus: Autophagy-related protein 18h (927 aa).

Disordered stretches follow at residues 1–25 (MKSN…NGTN) and 333–353 (DGPG…VGSH). A compositionally biased stretch (low complexity) spans 335 to 344 (PGPSLSSSPG). WD repeat units follow at residues 379–419 (AHTS…TKNG) and 441–482 (MTSA…NVLE). Disordered stretches follow at residues 750 to 788 (NRGF…EERR) and 844 to 927 (IENS…SEEG). Over residues 846–859 (NSSGISGDSNVSSN) the composition is skewed to low complexity. The segment covering 896-907 (ETEHKDAPSDGK) has biased composition (basic and acidic residues).

This sequence belongs to the WD repeat PROPPIN family. In terms of assembly, component of the PI(3,5)P2 regulatory complex at least composed of ATG18, SAC/FIG4, FAB1 and VAC14. In terms of tissue distribution, expressed in roots, flowers and leaves.

It is found in the preautophagosomal structure membrane. Its subcellular location is the vacuole membrane. In terms of biological role, the PI(3,5)P2 regulatory complex regulates both the synthesis and turnover of phosphatidylinositol 3,5-bisphosphate (PtdIns(3,5)P2). Required for autophagy. This Arabidopsis thaliana (Mouse-ear cress) protein is Autophagy-related protein 18h (ATG18H).